We begin with the raw amino-acid sequence, 142 residues long: 3-hydroxyacyl-[acyl-carrier-protein] dehydratase FabZ (142 aa).

His-50 is a catalytic residue.

It belongs to the thioester dehydratase family. FabZ subfamily.

Its subcellular location is the cytoplasm. The enzyme catalyses a (3R)-hydroxyacyl-[ACP] = a (2E)-enoyl-[ACP] + H2O. In terms of biological role, involved in unsaturated fatty acids biosynthesis. Catalyzes the dehydration of short chain beta-hydroxyacyl-ACPs and long chain saturated and unsaturated beta-hydroxyacyl-ACPs. The sequence is that of 3-hydroxyacyl-[acyl-carrier-protein] dehydratase FabZ from Clostridium botulinum (strain Alaska E43 / Type E3).